The sequence spans 345 residues: NADPH dehydrogenase (345 aa).

Position 23 to 26 (23 to 26) interacts with FMN; it reads SPMC. Residue tyrosine 28 participates in substrate binding. Residues alanine 60 and glutamine 102 each coordinate FMN. 164–167 lines the substrate pocket; it reads HGAH. Residues arginine 215 and 307 to 308 each bind FMN; that span reads GR.

It belongs to the NADH:flavin oxidoreductase/NADH oxidase family. NamA subfamily. In terms of assembly, homotetramer. It depends on FMN as a cofactor.

It carries out the reaction A + NADPH + H(+) = AH2 + NADP(+). In terms of biological role, catalyzes the reduction of the double bond of an array of alpha,beta-unsaturated aldehydes and ketones. It also reduces the nitro group of nitroester and nitroaromatic compounds. It could have a role in detoxification processes. The polypeptide is NADPH dehydrogenase (Bacillus cereus (strain Q1)).